A 2274-amino-acid chain; its full sequence is Adenomatous polyposis coli protein 2 (2274 aa).

Residues 5–59 adopt a coiled-coil conformation; that stretch reads MASYEQLVRQVEALKAENTHLRQELRDNSSHLSKLETETSGMKEVLKHLQGKLEQ. Disordered stretches follow at residues 97-120 and 248-269; these read GPEP…KDSF and VEEE…QPGN. ARM repeat units lie at residues 301–341, 472–511, 515–555, 557–602, 608–647, and 650–689; these read PESC…GAKD, ANKA…NLSW, INSK…NLSA, STEN…NVSS, EDYR…NLSA, and PRDQ…NLLA. The stretch at 832–856 forms a coiled coil; it reads AAKAKAKLALAVARIDRLVEDISAL. Disordered regions lie at residues 859-901, 1061-1143, and 1165-1216; these read SSDD…GSRA, CSSL…NCVQ, and SIAS…TSQF. Residues 861-870 show a composition bias toward low complexity; it reads DDSFSLSSGD. Repeat 1 spans residues 1049–1068; the sequence is LVAQDGPMSLSRCSSLSSLS. The tract at residues 1049–1565 is 5 X 20 AA approximate repeat of F-X-V-E-X-T-P-X-C-F-S-R-X-S-S-L-S-S-L-S; the sequence is LVAQDGPMSL…SLTSSASSLS (517 aa). An interaction with CTNNB1 region spans residues 1049–1565; sequence LVAQDGPMSL…SLTSSASSLS (517 aa). The span at 1077 to 1086 shows a compositional bias: polar residues; the sequence is QAENLDSDSS. Residues 1092–1103 show a composition bias toward low complexity; sequence EAGPGEAELGRA. Polar residues predominate over residues 1133 to 1143; it reads TPSSSSENCVQ. The stretch at 1140 to 1159 is repeat 2; that stretch reads NCVQETPLVLSRCSSVSSLG. Residues 1250–1269 form repeat 3; it reads FTVEKPDENFSCASSLSALA. 6 disordered regions span residues 1290-1323, 1368-1480, 1493-1631, 1699-2003, 2022-2122, and 2135-2274; these read ERAV…SATD, RGDD…LQSL, FYDS…DIRP, STLQ…RGRP, PRQP…IKDE, and TALP…SLLE. A compositionally biased stretch (polar residues) spans 1374–1397; the sequence is TDSAEGTPVNFSSAASLSDETLQG. The stretch at 1375-1394 is repeat 4; sequence DSAEGTPVNFSSAASLSDET. Over residues 1399–1411 the composition is skewed to basic and acidic residues; the sequence is SRDKPAGPGDRQK. Over residues 1455 to 1470 the composition is skewed to polar residues; it reads RPQSARSNRDSSCQTR. The segment covering 1517–1529 has biased composition (basic and acidic residues); the sequence is LKREKPAGRKETP. Repeat 5 spans residues 1546–1565; sequence LIVDETPPCYSLTSSASSLS. Positions 1556–1574 are enriched in low complexity; it reads SLTSSASSLSEPEAPEQPA. A phosphoserine mark is found at S1563 and S1565. Residues 1608-1624 are compositionally biased toward basic residues; it reads PRRRTQVPGSRRRKPRA. Low complexity-rich tracts occupy residues 1780–1795 and 1839–1868; these read SGPC…SGTT and LAKT…TPTG. The segment at 1792-1871 is required for localization to microtubules and function in microtubule stabilization; the sequence is SGTTQPETVT…PLATPTGGPL (80 aa). S1861 bears the Phosphoserine mark. A compositionally biased stretch (pro residues) spans 1910 to 1921; that stretch reads RVPPPLARPSPE. Low complexity-rich tracts occupy residues 1945–1955 and 1983–1997; these read RMASARSSGSE and LSSA…QAAS. The segment at 2037–2114 is interaction with MAPRE1 and MAPRE3; it reads GLAPLAPRRT…PLPRVAPPGT (78 aa). Residues 2165 to 2179 are compositionally biased toward polar residues; sequence DVATSKTNSSTSPSL.

Belongs to the adenomatous polyposis coli (APC) family. Interacts with PSRC1. Interacts with MAPRE3. Interacts with APC, CTNNB1, TP53BP2, MAPRE1 and possibly with AXIN2. In terms of tissue distribution, expressed in brain and other neural tissues.

It localises to the cytoplasm. It is found in the cytoskeleton. Its subcellular location is the golgi apparatus. The protein resides in the perinuclear region. Functionally, stabilizes microtubules and may regulate actin fiber dynamics through the activation of Rho family GTPases. May also function in Wnt signaling by promoting the rapid degradation of CTNNB1. This is Adenomatous polyposis coli protein 2 (Apc2) from Mus musculus (Mouse).